The sequence spans 244 residues: Claudin-12 (244 aa).

At 1-10 (MGCRDVHAAT) the chain is on the cytoplasmic side. Residues 11-31 (VLSFLCGIASVAGLFAGTLLP) form a helical membrane-spanning segment. Over 32–87 (NWRKLRLITFNRNEKNLTVYTGLWVKCARYDGGNDCLMYDAAWYSSVDQLDLRVLQ) the chain is Extracellular. The chain crosses the membrane as a helical span at residues 88-108 (FALPLSILIAMGALLLCLIGM). The Cytoplasmic portion of the chain corresponds to 109–135 (CNTAFRSSVPNIKLAKCLVNSAGCHLV). A helical membrane pass occupies residues 136–156 (AGLLFFLAGTVSLSPSIWVIF). At 157-174 (YNIHLNRKFEPVFAFDYA) the chain is on the extracellular side. Residues 175 to 195 (VYVTVASAGGLFMTALLLFIW) form a helical membrane-spanning segment. Residues 196–244 (YCACKSLPSPFWQPLYSHPPGMHTYSQPYSARSRLSAIEIDIPVVSHTT) lie on the Cytoplasmic side of the membrane. Serine 228 and serine 231 each carry phosphoserine.

The protein belongs to the claudin family. Interacts with OCLN.

The protein resides in the cell junction. It is found in the tight junction. The protein localises to the cell membrane. Its function is as follows. Plays a major role in tight junction-specific obliteration of the intercellular space, through calcium-independent cell-adhesion activity. This is Claudin-12 (CLDN12) from Bos taurus (Bovine).